Consider the following 291-residue polypeptide: UDP-N-acetylenolpyruvoylglucosamine reductase (291 aa).

The FAD-binding PCMH-type domain occupies 22–187; sequence RIGGPARYFK…ASATFQLTKD (166 aa). Residue R166 is part of the active site. C214 acts as the Proton donor in catalysis. E283 is an active-site residue.

It belongs to the MurB family. The cofactor is FAD.

Its subcellular location is the cytoplasm. It carries out the reaction UDP-N-acetyl-alpha-D-muramate + NADP(+) = UDP-N-acetyl-3-O-(1-carboxyvinyl)-alpha-D-glucosamine + NADPH + H(+). It functions in the pathway cell wall biogenesis; peptidoglycan biosynthesis. Its function is as follows. Cell wall formation. This Chlamydia trachomatis serovar A (strain ATCC VR-571B / DSM 19440 / HAR-13) protein is UDP-N-acetylenolpyruvoylglucosamine reductase.